Reading from the N-terminus, the 208-residue chain is MPDTQPNVSPNPIRRRGLGRDATVASICGLVVALMVGASFAAVPFYNWFCRTTGFNGTTQVAGVAPSSAPLARKVAVRFDSNINGLPWTFEPEQREIEVAIGQVFTAYYSVTNTAKHATTGQAAYNVTPLTVGSYFTKINCFCFTEQTLAAGETREMPVVFYVDPSFAADSENDAVKTITLSYTFYPVREPAPKPLASTAPDKRKGNL.

Residues methionine 1 to glycine 19 lie on the Cytoplasmic side of the membrane. The helical; Signal-anchor for type II membrane protein transmembrane segment at arginine 20–alanine 42 threads the bilayer. Residues valine 43–leucine 208 are Periplasmic-facing.

It belongs to the COX11/CtaG family.

It localises to the cell inner membrane. Exerts its effect at some terminal stage of cytochrome c oxidase synthesis, probably by being involved in the insertion of the copper B into subunit I. The polypeptide is Cytochrome c oxidase assembly protein CtaG (Rhodopseudomonas palustris (strain HaA2)).